We begin with the raw amino-acid sequence, 532 residues long: 2-isopropylmalate synthase (532 aa).

In terms of domain architecture, Pyruvate carboxyltransferase spans 5–267 (VIIFDTTLRD…HTNINHQEIY (263 aa)). The Mn(2+) site is built by Asp-14, His-202, His-204, and Asn-238. Residues 392–532 (HLDYFSVQSG…SKQQNSQETV (141 aa)) are regulatory domain. The segment at 513-532 (QQHNNQQQNDSKQQNSQETV) is disordered.

The protein belongs to the alpha-IPM synthase/homocitrate synthase family. LeuA type 1 subfamily. Homodimer. Mn(2+) is required as a cofactor.

It is found in the cytoplasm. The enzyme catalyses 3-methyl-2-oxobutanoate + acetyl-CoA + H2O = (2S)-2-isopropylmalate + CoA + H(+). The protein operates within amino-acid biosynthesis; L-leucine biosynthesis; L-leucine from 3-methyl-2-oxobutanoate: step 1/4. Catalyzes the condensation of the acetyl group of acetyl-CoA with 3-methyl-2-oxobutanoate (2-ketoisovalerate) to form 3-carboxy-3-hydroxy-4-methylpentanoate (2-isopropylmalate). The polypeptide is 2-isopropylmalate synthase (Pectobacterium atrosepticum (strain SCRI 1043 / ATCC BAA-672) (Erwinia carotovora subsp. atroseptica)).